We begin with the raw amino-acid sequence, 195 residues long: ATP-dependent Clp protease proteolytic subunit (195 aa).

The active-site Nucleophile is the Ser98. His123 is an active-site residue.

It belongs to the peptidase S14 family. Fourteen ClpP subunits assemble into 2 heptameric rings which stack back to back to give a disk-like structure with a central cavity, resembling the structure of eukaryotic proteasomes.

It is found in the cytoplasm. The enzyme catalyses Hydrolysis of proteins to small peptides in the presence of ATP and magnesium. alpha-casein is the usual test substrate. In the absence of ATP, only oligopeptides shorter than five residues are hydrolyzed (such as succinyl-Leu-Tyr-|-NHMec, and Leu-Tyr-Leu-|-Tyr-Trp, in which cleavage of the -Tyr-|-Leu- and -Tyr-|-Trp bonds also occurs).. Its function is as follows. Cleaves peptides in various proteins in a process that requires ATP hydrolysis. Has a chymotrypsin-like activity. Plays a major role in the degradation of misfolded proteins. The polypeptide is ATP-dependent Clp protease proteolytic subunit (Staphylococcus haemolyticus (strain JCSC1435)).